Here is an 834-residue protein sequence, read N- to C-terminus: ABC transporter A family member 11 (834 aa).

Helical transmembrane passes span 35–55, 188–208, 235–255, 269–289, 297–319, 324–346, and 355–375; these read FFILGILLPMISIGASIILNN, MPMILQYGFVFFIPYFAILIV, VFDYLIFLIPTIIGWILLYSF, FLLFLTFGISAIPFGFVLQFI, NKWLYPFTSIVTSIPSALISVAF, PLIVELLLSILPTFSFCNGLKAL, and SYTILIQLLSGLIYLILIYFI. Residues 452 to 693 enclose the ABC transporter domain; it reads LDKPSIIERC…YGSGYTIDII (242 aa). ATP is bound at residue 495 to 502; it reads GPNGSGKS. Positions 779–789 are enriched in polar residues; sequence KQQTNNKSNII. Residues 779-834 are disordered; it reads KQQTNNKSNIINNNNNNNNNNNNNNNNNNNNNNNNNNNNNNNNNTNNNTNNNQLIN. A compositionally biased stretch (low complexity) spans 790–834; it reads NNNNNNNNNNNNNNNNNNNNNNNNNNNNNNNNNTNNNTNNNQLIN.

This sequence belongs to the ABC transporter superfamily. ABCA family.

It localises to the membrane. The sequence is that of ABC transporter A family member 11 (abcA11) from Dictyostelium discoideum (Social amoeba).